The primary structure comprises 500 residues: Galactose/methyl galactoside import ATP-binding protein MglA (500 aa).

ABC transporter domains follow at residues 8–243 and 257–500; these read LEME…VGRD and EMIL…AKYL. ATP is bound at residue 40 to 47; it reads GENGAGKS.

This sequence belongs to the ABC transporter superfamily. Galactose/methyl galactoside importer (TC 3.A.1.2.3) family. The complex is composed of one ATP-binding protein (MglA), two transmembrane proteins (MglC) and a solute-binding protein (MglB).

The protein localises to the cell inner membrane. The enzyme catalyses D-galactose(out) + ATP + H2O = D-galactose(in) + ADP + phosphate + H(+). It carries out the reaction methyl beta-D-galactoside(out) + ATP + H2O = methyl beta-D-galactoside(in) + ADP + phosphate + H(+). Its function is as follows. Part of the ABC transporter complex MglABC involved in galactose/methyl galactoside import. Responsible for energy coupling to the transport system. The protein is Galactose/methyl galactoside import ATP-binding protein MglA of Fusobacterium nucleatum subsp. nucleatum (strain ATCC 25586 / DSM 15643 / BCRC 10681 / CIP 101130 / JCM 8532 / KCTC 2640 / LMG 13131 / VPI 4355).